The sequence spans 460 residues: Serine--tRNA ligase (460 aa).

L-serine is bound at residue 255–257 (TAE). ATP-binding positions include 286–288 (RKE) and Val-302. Glu-309 provides a ligand contact to L-serine. 373–376 (EMVS) lines the ATP pocket. Thr-409 is a binding site for L-serine.

It belongs to the class-II aminoacyl-tRNA synthetase family. Type-1 seryl-tRNA synthetase subfamily. Homodimer. The tRNA molecule binds across the dimer.

Its subcellular location is the cytoplasm. The catalysed reaction is tRNA(Ser) + L-serine + ATP = L-seryl-tRNA(Ser) + AMP + diphosphate + H(+). It carries out the reaction tRNA(Sec) + L-serine + ATP = L-seryl-tRNA(Sec) + AMP + diphosphate + H(+). The protein operates within aminoacyl-tRNA biosynthesis; selenocysteinyl-tRNA(Sec) biosynthesis; L-seryl-tRNA(Sec) from L-serine and tRNA(Sec): step 1/1. Catalyzes the attachment of serine to tRNA(Ser). Is also able to aminoacylate tRNA(Sec) with serine, to form the misacylated tRNA L-seryl-tRNA(Sec), which will be further converted into selenocysteinyl-tRNA(Sec). In Hyperthermus butylicus (strain DSM 5456 / JCM 9403 / PLM1-5), this protein is Serine--tRNA ligase.